We begin with the raw amino-acid sequence, 281 residues long: Alcohol dehydrogenase-related 31 kDa protein (281 aa).

11 to 34 contributes to the NAD(+) binding site; sequence YVADCGGIALETSKVLMTKNIAKL. Substrate is bound at residue serine 139. The active-site Proton acceptor is the tyrosine 152.

It belongs to the short-chain dehydrogenases/reductases (SDR) family.

The polypeptide is Alcohol dehydrogenase-related 31 kDa protein (Adhr) (Drosophila ambigua (Fruit fly)).